Reading from the N-terminus, the 180-residue chain is MVIGVTGKIGTGKSTVCEILKNKYGAHVVNVDRIGHEVLEEVKEKLVELFGGSVLEDGKVNRKKLAGIVFESRENLKKLELLVHPLMKKRVQEIINKTSGLIVIEAALLKRMGLDQLCDHVITVVASRETILKRNREADRRLKFQEDIVPQGIVVANNSTLEDLEKKVEEVMKLVWEKRE.

A DPCK domain is found at Val-2–Glu-180. ATP is bound at residue Gly-10 to Thr-15.

This sequence belongs to the CoaE family.

Its subcellular location is the cytoplasm. It carries out the reaction 3'-dephospho-CoA + ATP = ADP + CoA + H(+). The protein operates within cofactor biosynthesis; coenzyme A biosynthesis; CoA from (R)-pantothenate: step 5/5. Functionally, catalyzes the phosphorylation of the 3'-hydroxyl group of dephosphocoenzyme A to form coenzyme A. This chain is Dephospho-CoA kinase, found in Thermotoga maritima (strain ATCC 43589 / DSM 3109 / JCM 10099 / NBRC 100826 / MSB8).